Here is a 745-residue protein sequence, read N- to C-terminus: 1,4-alpha-glucan branching enzyme GlgB (745 aa).

Aspartate 416 serves as the catalytic Nucleophile. The active-site Proton donor is the glutamate 469.

This sequence belongs to the glycosyl hydrolase 13 family. GlgB subfamily. As to quaternary structure, monomer.

The catalysed reaction is Transfers a segment of a (1-&gt;4)-alpha-D-glucan chain to a primary hydroxy group in a similar glucan chain.. It participates in glycan biosynthesis; glycogen biosynthesis. Functionally, catalyzes the formation of the alpha-1,6-glucosidic linkages in glycogen by scission of a 1,4-alpha-linked oligosaccharide from growing alpha-1,4-glucan chains and the subsequent attachment of the oligosaccharide to the alpha-1,6 position. In Shewanella sp. (strain W3-18-1), this protein is 1,4-alpha-glucan branching enzyme GlgB.